A 383-amino-acid chain; its full sequence is uncharacterized protein (383 aa).

This sequence belongs to the peptidase M20 family.

This is an uncharacterized protein from Staphylococcus epidermidis (strain ATCC 35984 / DSM 28319 / BCRC 17069 / CCUG 31568 / BM 3577 / RP62A).